The chain runs to 152 residues: Arginine repressor (152 aa).

The protein belongs to the ArgR family.

It localises to the cytoplasm. The protein operates within amino-acid biosynthesis; L-arginine biosynthesis [regulation]. Functionally, regulates arginine biosynthesis genes. This Lactiplantibacillus plantarum (strain ATCC BAA-793 / NCIMB 8826 / WCFS1) (Lactobacillus plantarum) protein is Arginine repressor.